The sequence spans 95 residues: Aspartyl/glutamyl-tRNA(Asn/Gln) amidotransferase subunit C (95 aa).

It belongs to the GatC family. Heterotrimer of A, B and C subunits.

It carries out the reaction L-glutamyl-tRNA(Gln) + L-glutamine + ATP + H2O = L-glutaminyl-tRNA(Gln) + L-glutamate + ADP + phosphate + H(+). The catalysed reaction is L-aspartyl-tRNA(Asn) + L-glutamine + ATP + H2O = L-asparaginyl-tRNA(Asn) + L-glutamate + ADP + phosphate + 2 H(+). Allows the formation of correctly charged Asn-tRNA(Asn) or Gln-tRNA(Gln) through the transamidation of misacylated Asp-tRNA(Asn) or Glu-tRNA(Gln) in organisms which lack either or both of asparaginyl-tRNA or glutaminyl-tRNA synthetases. The reaction takes place in the presence of glutamine and ATP through an activated phospho-Asp-tRNA(Asn) or phospho-Glu-tRNA(Gln). The polypeptide is Aspartyl/glutamyl-tRNA(Asn/Gln) amidotransferase subunit C (Chromobacterium violaceum (strain ATCC 12472 / DSM 30191 / JCM 1249 / CCUG 213 / NBRC 12614 / NCIMB 9131 / NCTC 9757 / MK)).